We begin with the raw amino-acid sequence, 434 residues long: F-box/FBD/LRR-repeat protein At3g26920 (434 aa).

The 50-residue stretch at 16–65 (EDRISQLPEALLLQILSLLPTKEVVAVSVLAKRWRFLWKMVPSLEFFYYF) folds into the F-box domain. LRR repeat units lie at residues 69-95 (LERFSYNVSKCLFSHQAPFLQSLHLNM), 100-125 (DPRIMDFEILIGIAFGRQLRKLVLKV), 145-172 (TLELYHCILIDVPFPVCLKSLRTLNLHE), 173-198 (VEFVNDESVVNLLAGCISLENLVIHQ), 219-244 (VIVEYYEEFSVFVVNTPSLKYLKIEG), 265-290 (IIDVSFKVFESILGSLASVQRLSLKV), and 315-341 (TYKPKWWNLLTLMLDTSPNLQVLKIFD). The FBD domain occupies 353-403 (KWNEPKNVPECLLLHLETFVWTCYEGKLENEIELAKYILRNARRLKKATFS).

The polypeptide is F-box/FBD/LRR-repeat protein At3g26920 (Arabidopsis thaliana (Mouse-ear cress)).